A 618-amino-acid polypeptide reads, in one-letter code: Matrix metalloproteinase-24 (618 aa).

The N-terminal stretch at 1 to 41 is a signal peptide; that stretch reads MPRSRGGRAAPGQASRWSGWRAPGRLLPLLPALCCLAAAAG. Residues 42-128 constitute a propeptide that is removed on maturation; that stretch reads AGKPAGADAP…HLSRRRRNKR (87 aa). The Extracellular portion of the chain corresponds to 42-575; sequence AGKPAGADAP…IDDVPGSVNA (534 aa). The short motif at 110–117 is the Cysteine switch element; that stretch reads PRCGVPDH. Residues cysteine 112 and histidine 255 each coordinate Zn(2+). Residue glutamate 256 is part of the active site. Positions 259 and 265 each coordinate Zn(2+). A disordered region spans residues 296–352; it reads QKIYGPPAEPLEPTRPLPTLPVRRIHSPSERKHERHPRPPRPPLGDRPSTPGAKPNI. A compositionally biased stretch (pro residues) spans 302 to 314; that stretch reads PAEPLEPTRPLPT. Hemopexin repeat units follow at residues 350 to 398, 399 to 444, 446 to 494, and 495 to 542; these read PNIC…WKGL, PARI…GSCL, REGI…KGIP, and QAPQ…WMGC. Cysteine 353 and cysteine 542 are oxidised to a cystine. Residues 576-596 form a helical membrane-spanning segment; it reads VAVVVPCTLSLCLLVLLYTIF. Residues 597 to 618 are Cytoplasmic-facing; the sequence is QFKNKAGPQPVTYYKRPVQEWV. The PDZ-binding motif lies at 616–618; the sequence is EWV.

The protein belongs to the peptidase M10A family. In terms of assembly, interacts with GRIP1 and GRIP2. Interacts (via PDZ-binding motif) with APBA3 (via PDZ domain). It depends on Zn(2+) as a cofactor. The cofactor is Ca(2+). Cleaved by a furin endopeptidase in the trans-Golgi network. As to expression, mainly expressed in neuronal cells of both central and peripheral nervous systems. Expressed by CGRP-containing peptidergic nociceptors in dorsal root ganglia. Expressed in adult neural stem cell and ependymocytes. Expressed at low level in testis.

It is found in the cell membrane. Its subcellular location is the golgi apparatus. The protein localises to the trans-Golgi network membrane. The protein resides in the secreted. It localises to the extracellular space. It is found in the extracellular matrix. Metalloprotease that mediates cleavage of N-cadherin (CDH2) and acts as a regulator of neuro-immune interactions and neural stem cell quiescence. Involved in cell-cell interactions between nociceptive neurites and mast cells, possibly by mediating cleavage of CDH2, thereby acting as a mediator of peripheral thermal nociception and inflammatory hyperalgesia. Key regulator of neural stem cells quiescence by mediating cleavage of CDH2, affecting CDH2-mediated anchorage of neural stem cells to ependymocytes in the adult subependymal zone, leading to modulate their quiescence. May play a role in axonal growth. Able to activate progelatinase A. May also be a proteoglycanase involved in degradation of proteoglycans, such as dermatan sulfate and chondroitin sulfate proteoglycans. Cleaves partially fibronectin, but not collagen type I, nor laminin. This is Matrix metalloproteinase-24 (Mmp24) from Mus musculus (Mouse).